Consider the following 396-residue polypeptide: Lipopolysaccharide assembly protein B (396 aa).

Residues Met-1–Gly-20 form a helical membrane-spanning segment. Topologically, residues Arg-21–Asn-396 are cytoplasmic. TPR repeat units lie at residues Leu-35 to Glu-68, Phe-77 to Tyr-109, Glu-149 to Glu-182, and Val-221 to Tyr-254. Fe cation is bound by residues Cys-364, Cys-367, Cys-378, and Cys-381.

It belongs to the LapB family.

The protein localises to the cell inner membrane. Modulates cellular lipopolysaccharide (LPS) levels by regulating LpxC, which is involved in lipid A biosynthesis. May act by modulating the proteolytic activity of FtsH towards LpxC. May also coordinate assembly of proteins involved in LPS synthesis at the plasma membrane. The polypeptide is Lipopolysaccharide assembly protein B (Haemophilus influenzae (strain ATCC 51907 / DSM 11121 / KW20 / Rd)).